We begin with the raw amino-acid sequence, 500 residues long: Aspartyl/glutamyl-tRNA(Asn/Gln) amidotransferase subunit B (500 aa).

Belongs to the GatB/GatE family. GatB subfamily. As to quaternary structure, heterotrimer of A, B and C subunits.

It catalyses the reaction L-glutamyl-tRNA(Gln) + L-glutamine + ATP + H2O = L-glutaminyl-tRNA(Gln) + L-glutamate + ADP + phosphate + H(+). The enzyme catalyses L-aspartyl-tRNA(Asn) + L-glutamine + ATP + H2O = L-asparaginyl-tRNA(Asn) + L-glutamate + ADP + phosphate + 2 H(+). Functionally, allows the formation of correctly charged Asn-tRNA(Asn) or Gln-tRNA(Gln) through the transamidation of misacylated Asp-tRNA(Asn) or Glu-tRNA(Gln) in organisms which lack either or both of asparaginyl-tRNA or glutaminyl-tRNA synthetases. The reaction takes place in the presence of glutamine and ATP through an activated phospho-Asp-tRNA(Asn) or phospho-Glu-tRNA(Gln). The sequence is that of Aspartyl/glutamyl-tRNA(Asn/Gln) amidotransferase subunit B from Rhizobium meliloti (strain 1021) (Ensifer meliloti).